We begin with the raw amino-acid sequence, 267 residues long: MSQHILKNTIEDLELVRSKSPLVHNITNYVVMNNTANALLAIGASPIMAHAIEEVEEMVTICSATVINIGTLSEPWIQSMEKAAKKAVSLGKPLVLDPVGAGASNIRNAAIRRILDAGNPTIVRGNASEILSTLSSSGKTKGVDATDSSESAVETGKSLSKVTGGVVVISGATDFILKGTDMAQISNGDALMTKVTGLGCTASALCGAFAAVQKDQFRAATSAMAVMGIAGEMAKSKTASPGSFQVAFLDALYELNADTIKQKLNAK.

Methionine 48 contacts substrate. Positions 124 and 170 each coordinate ATP. Glycine 197 contacts substrate.

The protein belongs to the Thz kinase family. Requires Mg(2+) as cofactor.

The catalysed reaction is 5-(2-hydroxyethyl)-4-methylthiazole + ATP = 4-methyl-5-(2-phosphooxyethyl)-thiazole + ADP + H(+). It participates in cofactor biosynthesis; thiamine diphosphate biosynthesis; 4-methyl-5-(2-phosphoethyl)-thiazole from 5-(2-hydroxyethyl)-4-methylthiazole: step 1/1. In terms of biological role, catalyzes the phosphorylation of the hydroxyl group of 4-methyl-5-beta-hydroxyethylthiazole (THZ). In Leptospira biflexa serovar Patoc (strain Patoc 1 / Ames), this protein is Hydroxyethylthiazole kinase.